We begin with the raw amino-acid sequence, 562 residues long: Potassium-transporting ATPase potassium-binding subunit (562 aa).

Transmembrane regions (helical) follow at residues 5–25, 65–85, 135–155, 181–201, 257–277, 283–303, 331–351, 358–378, 381–401, 422–442, 486–506, and 528–548; these read GILAIFLVVLALVACAWPLGG, AYLRAMMVSNLVMALFAYAVF, IGITFLQFTSAATGLAAAMAF, LLLPIAAILAVLLLALGVPET, ILEIMGMGLIPTALVFTAGHF, LAIVLCTLLGAILLAGAYIVY, FGLPLTSLFVAATTAYTTGAV, LMPLSGMVPLLFMMFNLIFGG, VGLLNILMFLIIAVFISGLMV, AAMLVHPFVILVPTAIAMALP, ISIGLVMLFGRYVSIIAMLAI, and FAFGYVFVAVFIIVGALTFFP.

Belongs to the KdpA family. The system is composed of three essential subunits: KdpA, KdpB and KdpC.

The protein resides in the cell membrane. Functionally, part of the high-affinity ATP-driven potassium transport (or Kdp) system, which catalyzes the hydrolysis of ATP coupled with the electrogenic transport of potassium into the cytoplasm. This subunit binds the extracellular potassium ions and delivers the ions to the membrane domain of KdpB through an intramembrane tunnel. The protein is Potassium-transporting ATPase potassium-binding subunit of Alicyclobacillus acidocaldarius subsp. acidocaldarius (strain ATCC 27009 / DSM 446 / BCRC 14685 / JCM 5260 / KCTC 1825 / NBRC 15652 / NCIMB 11725 / NRRL B-14509 / 104-IA) (Bacillus acidocaldarius).